We begin with the raw amino-acid sequence, 322 residues long: uncharacterized protein (322 aa).

Polar residues predominate over residues 1 to 13 (MTNADEQNMGQQE). Disordered stretches follow at residues 1 to 94 (MTNA…EEYE) and 125 to 322 (RREM…TDEE). Positions 14 to 31 (GTDTATTAQDTNTQTVGT) are enriched in low complexity. Positions 32 to 50 (QSENTQNTQQASDAQTEQT) are enriched in polar residues. Residues 64–75 (EVDEDDVLDAQE) are compositionally biased toward acidic residues. 4 stretches are compositionally biased toward basic and acidic residues: residues 141-227 (GGDR…RGGD), 235-269 (RPRE…RGGD), 277-295 (RPRE…RTDD), and 308-322 (ARAD…TDEE).

This is an uncharacterized protein from Deinococcus radiodurans (strain ATCC 13939 / DSM 20539 / JCM 16871 / CCUG 27074 / LMG 4051 / NBRC 15346 / NCIMB 9279 / VKM B-1422 / R1).